The primary structure comprises 471 residues: PE-PGRS family protein PE_PGRS33 (471 aa).

The essential for translocation to the cell surface stretch occupies residues methionine 1–alanine 30. The PE domain maps to methionine 1–alanine 93. The interacts with TLR2 stretch occupies residues glycine 140–glycine 230.

The protein belongs to the mycobacterial PE family. PGRS subfamily. In terms of assembly, interacts with human TLR2.

It localises to the secreted. The protein localises to the cell wall. Its subcellular location is the cell surface. It is found in the cell outer membrane. Its function is as follows. Induces TNF-alpha release through human Toll-like receptor 2 (TLR2) signaling pathway, leading to macrophage apoptosis. The protein is PE-PGRS family protein PE_PGRS33 (PE_PGRS33) of Mycobacterium tuberculosis (strain CDC 1551 / Oshkosh).